We begin with the raw amino-acid sequence, 127 residues long: Glycine cleavage system H protein (127 aa).

The region spanning 24–105 (TALVGITDFA…YGEGWMVKMK (82 aa)) is the Lipoyl-binding domain. An N6-lipoyllysine modification is found at Lys-65.

The protein belongs to the GcvH family. As to quaternary structure, the glycine cleavage system is composed of four proteins: P, T, L and H. (R)-lipoate serves as cofactor.

Functionally, the glycine cleavage system catalyzes the degradation of glycine. The H protein shuttles the methylamine group of glycine from the P protein to the T protein. The sequence is that of Glycine cleavage system H protein from Chlorobium phaeovibrioides (strain DSM 265 / 1930) (Prosthecochloris vibrioformis (strain DSM 265)).